The chain runs to 268 residues: UPF0328 protein ECU09_2030 (268 aa).

This sequence belongs to the UPF0328 family.

This Encephalitozoon cuniculi (strain GB-M1) (Microsporidian parasite) protein is UPF0328 protein ECU09_2030.